Consider the following 438-residue polypeptide: Coenzyme A disulfide reductase (438 aa).

8 to 33 is a binding site for FAD; sequence GAVAGGATCASQIRRLDKESDIIIFE. Positions 15, 19, 22, 39, and 42 each coordinate substrate. Catalysis depends on Cys43, which acts as the Nucleophile. The active-site Redox-active is Cys43. Lys71 is a binding site for substrate. 151–166 contributes to the NADP(+) binding site; sequence VLVVGAGYVSLEVLEN. 267–277 is a binding site for FAD; sequence TNVPNIYAIGD. Position 299 (His299) interacts with substrate. FAD is bound at residue Tyr419. Lys427 contacts substrate.

The protein belongs to the class-III pyridine nucleotide-disulfide oxidoreductase family. Homodimer. The cofactor is FAD.

The enzyme catalyses NADP(+) + 2 CoA = CoA-disulfide + NADPH + H(+). Functionally, catalyzes specifically the NADPH-dependent reduction of coenzyme A disulfide. In Staphylococcus aureus (strain USA300), this protein is Coenzyme A disulfide reductase.